A 270-amino-acid chain; its full sequence is Putative phosphoenolpyruvate synthase regulatory protein (270 aa).

150–157 (GVSRCGKT) is a binding site for ADP.

It belongs to the pyruvate, phosphate/water dikinase regulatory protein family. PSRP subfamily.

The catalysed reaction is [pyruvate, water dikinase] + ADP = [pyruvate, water dikinase]-phosphate + AMP + H(+). It carries out the reaction [pyruvate, water dikinase]-phosphate + phosphate + H(+) = [pyruvate, water dikinase] + diphosphate. Bifunctional serine/threonine kinase and phosphorylase involved in the regulation of the phosphoenolpyruvate synthase (PEPS) by catalyzing its phosphorylation/dephosphorylation. The polypeptide is Putative phosphoenolpyruvate synthase regulatory protein (Aeromonas hydrophila subsp. hydrophila (strain ATCC 7966 / DSM 30187 / BCRC 13018 / CCUG 14551 / JCM 1027 / KCTC 2358 / NCIMB 9240 / NCTC 8049)).